The primary structure comprises 219 residues: Thymidylate kinase (219 aa).

An ATP-binding site is contributed by 10–17 (GLEGAGKT).

This sequence belongs to the thymidylate kinase family.

The catalysed reaction is dTMP + ATP = dTDP + ADP. Its function is as follows. Phosphorylation of dTMP to form dTDP in both de novo and salvage pathways of dTTP synthesis. The sequence is that of Thymidylate kinase from Pectobacterium carotovorum subsp. carotovorum (strain PC1).